Consider the following 79-residue polypeptide: MTQKSIHPKWFNDTKVYCDGKHVMTVGSTQAELHVDIWSGNHPFFTGSQRIIDTEGRVEKFMRKYNLQSNNDKQSKLEV.

Belongs to the bacterial ribosomal protein bL31 family. Type A subfamily. In terms of assembly, part of the 50S ribosomal subunit.

Its subcellular location is the plastid. It localises to the chloroplast. Binds the 23S rRNA. The protein is Large ribosomal subunit protein bL31c of Gracilaria tenuistipitata var. liui (Red alga).